The following is a 434-amino-acid chain: Histidinol dehydrogenase (434 aa).

Residues Y130, Q188, and N211 each contribute to the NAD(+) site. Substrate contacts are provided by S237, Q259, and H262. Zn(2+)-binding residues include Q259 and H262. Residues E326 and H327 each act as proton acceptor in the active site. 4 residues coordinate substrate: H327, D360, E414, and H419. Residue D360 participates in Zn(2+) binding. A Zn(2+)-binding site is contributed by H419.

It belongs to the histidinol dehydrogenase family. Homodimer. It depends on Zn(2+) as a cofactor.

The enzyme catalyses L-histidinol + 2 NAD(+) + H2O = L-histidine + 2 NADH + 3 H(+). It participates in amino-acid biosynthesis; L-histidine biosynthesis; L-histidine from 5-phospho-alpha-D-ribose 1-diphosphate: step 9/9. Catalyzes the sequential NAD-dependent oxidations of L-histidinol to L-histidinaldehyde and then to L-histidine. The sequence is that of Histidinol dehydrogenase from Escherichia coli O157:H7.